Here is a 315-residue protein sequence, read N- to C-terminus: ATP synthase gamma chain (315 aa).

The protein belongs to the ATPase gamma chain family. As to quaternary structure, F-type ATPases have 2 components, CF(1) - the catalytic core - and CF(0) - the membrane proton channel. CF(1) has five subunits: alpha(3), beta(3), gamma(1), delta(1), epsilon(1). CF(0) has three main subunits: a, b and c.

It is found in the cellular thylakoid membrane. Its function is as follows. Produces ATP from ADP in the presence of a proton gradient across the membrane. The gamma chain is believed to be important in regulating ATPase activity and the flow of protons through the CF(0) complex. This chain is ATP synthase gamma chain, found in Cyanothece sp. (strain PCC 7425 / ATCC 29141).